A 275-amino-acid chain; its full sequence is 2,3,4,5-tetrahydropyridine-2,6-dicarboxylate N-succinyltransferase (275 aa).

2 residues coordinate substrate: Arg-108 and Asp-145.

The protein belongs to the transferase hexapeptide repeat family. In terms of assembly, homotrimer.

The protein localises to the cytoplasm. The catalysed reaction is (S)-2,3,4,5-tetrahydrodipicolinate + succinyl-CoA + H2O = (S)-2-succinylamino-6-oxoheptanedioate + CoA. It functions in the pathway amino-acid biosynthesis; L-lysine biosynthesis via DAP pathway; LL-2,6-diaminopimelate from (S)-tetrahydrodipicolinate (succinylase route): step 1/3. The chain is 2,3,4,5-tetrahydropyridine-2,6-dicarboxylate N-succinyltransferase from Maricaulis maris (strain MCS10) (Caulobacter maris).